Here is a 166-residue protein sequence, read N- to C-terminus: P2Y purinoceptor 2 (166 aa).

Residues Val-1–Arg-24 lie on the Cytoplasmic side of the membrane. Residues Val-25–Thr-45 traverse the membrane as a helical segment. The Extracellular portion of the chain corresponds to Thr-46–Ser-72. The helical transmembrane segment at Val-73–Met-93 threads the bilayer. The Cytoplasmic segment spans residues Ala-94–Ser-115. The helical transmembrane segment at Val-116–Thr-136 threads the bilayer. Residues Arg-137–Ala-159 are Extracellular-facing. A helical transmembrane segment spans residues Tyr-160–Leu-166.

Belongs to the G-protein coupled receptor 1 family.

It localises to the cell membrane. Functionally, receptor for ATP and UTP coupled to G-proteins that activate a phosphatidylinositol-calcium second messenger system. This is P2Y purinoceptor 2 (P2RY2) from Cricetulus griseus (Chinese hamster).